Reading from the N-terminus, the 216-residue chain is Ras-like protein (216 aa).

16-23 is a GTP binding site; that stretch reads GGGGVGKS. Residues 38 to 46 carry the Effector region motif; that stretch reads YDPTIEDSY. GTP is bound by residues 63–67 and 122–125; these read DTAGQ and NKCD. Residues Cys209 and Cys210 are each lipidated (S-palmitoyl cysteine). The residue at position 213 (Cys213) is a Cysteine methyl ester. Residue Cys213 is the site of S-geranylgeranyl cysteine attachment. Positions 214-216 are cleaved as a propeptide — removed in mature form; it reads VVL.

It belongs to the small GTPase superfamily. Ras family.

Its subcellular location is the cell membrane. It catalyses the reaction GTP + H2O = GDP + phosphate + H(+). Alternates between an inactive form bound to GDP and an active form bound to GTP. Activated by a guanine nucleotide-exchange factor (GEF) and inactivated by a GTPase-activating protein (GAP). In Cryptococcus neoformans var. neoformans serotype D (strain B-3501A) (Filobasidiella neoformans), this protein is Ras-like protein (RAS1).